The sequence spans 364 residues: Coproporphyrin III ferrochelatase (364 aa).

The Fe-coproporphyrin III site is built by arginine 29 and tyrosine 118. Residues histidine 169 and glutamate 250 each contribute to the Fe(2+) site.

The protein belongs to the ferrochelatase family.

The protein resides in the cytoplasm. It catalyses the reaction Fe-coproporphyrin III + 2 H(+) = coproporphyrin III + Fe(2+). Its pathway is porphyrin-containing compound metabolism; protoheme biosynthesis. Its function is as follows. Involved in coproporphyrin-dependent heme b biosynthesis. Catalyzes the insertion of ferrous iron into coproporphyrin III to form Fe-coproporphyrin III. The sequence is that of Coproporphyrin III ferrochelatase from Streptococcus pneumoniae (strain 70585).